We begin with the raw amino-acid sequence, 75 residues long: Exodeoxyribonuclease 7 small subunit (75 aa).

The protein belongs to the XseB family. Heterooligomer composed of large and small subunits.

Its subcellular location is the cytoplasm. The enzyme catalyses Exonucleolytic cleavage in either 5'- to 3'- or 3'- to 5'-direction to yield nucleoside 5'-phosphates.. In terms of biological role, bidirectionally degrades single-stranded DNA into large acid-insoluble oligonucleotides, which are then degraded further into small acid-soluble oligonucleotides. This chain is Exodeoxyribonuclease 7 small subunit, found in Chlamydia caviae (strain ATCC VR-813 / DSM 19441 / 03DC25 / GPIC) (Chlamydophila caviae).